We begin with the raw amino-acid sequence, 555 residues long: CCR4-NOT transcription complex subunit 6-like (555 aa).

The interval 1–152 (MRLIGMPKEK…NLYQDPDGTR (152 aa)) is required for interaction with CNOT1, CNOT3 and CNOT7. LRR repeat units lie at residues 57–78 (HLTA…IAKL), 80–101 (NLVY…LGNM), 103–125 (SLRE…GRLF), and 126–148 (QLQT…YQDP). Residues 158–555 (MLDNLAVHPE…VNGVHLPNRR (398 aa)) form a nuclease domain region. Mg(2+) is bound at residue Glu240. Glu240, Glu276, His360, and Pro365 together coordinate substrate. Residue Asp410 coordinates Mg(2+). Residue Asp410 is the Proton donor/acceptor of the active site. The substrate site is built by Asn412, Asn479, and Phe484.

The protein belongs to the CCR4/nocturin family. As to quaternary structure, component of the CCR4-NOT complex; distinct complexes seem to exist that differ in the participation of probably mutually exclusive catalytic subunits; the complex contains two deadenylase subunits, CNOT6 or CNOT6L, and CNOT7 or CNOT8. Interacts with CNOT1, CNOT3, CNOT7, CNOT8 and CNOT9. Interacts with TOB1. Interacts with NANOS2. Interacts with ZFP36. Interacts with ZFP36L2. Interacts with RBM46. Requires Mg(2+) as cofactor. In terms of tissue distribution, highly expressed in placenta, skeletal muscle, pancreas, testis and leukocytes. Weakly expressed in heart, spleen and thymus.

The protein resides in the cytoplasm. The protein localises to the nucleus. It carries out the reaction Exonucleolytic cleavage of poly(A) to 5'-AMP.. With respect to regulation, inhibited by free AMP, and with lesser efficiency also by CMP, GMP, UMP, ATP and neomycin. Its function is as follows. Has 3'-5' poly(A) exoribonuclease activity for synthetic poly(A) RNA substrate. Catalytic component of the CCR4-NOT complex which is one of the major cellular mRNA deadenylases and is linked to various cellular processes including bulk mRNA degradation, miRNA-mediated repression, translational repression during translational initiation and general transcription regulation. Additional complex functions may be a consequence of its influence on mRNA expression. May be involved in the deadenylation-dependent degradation of mRNAs through the 3'-UTR AU-rich element-mediated mechanism. Involved in deadenylation-dependent degradation of CDKN1B mRNA. Its mRNA deadenylase activity can be inhibited by TOB1. Mediates cell proliferation and cell survival and prevents cellular senescence. The sequence is that of CCR4-NOT transcription complex subunit 6-like (CNOT6L) from Homo sapiens (Human).